Here is a 525-residue protein sequence, read N- to C-terminus: GMP synthase [glutamine-hydrolyzing] (525 aa).

The Glutamine amidotransferase type-1 domain occupies 9–207; it reads RILILDFGSQ…VRDICQCEAL (199 aa). The Nucleophile role is filled by cysteine 86. Residues histidine 181 and glutamate 183 contribute to the active site. The 193-residue stretch at 208–400 folds into the GMPS ATP-PPase domain; the sequence is WTPAKIIDDA…LGLPYDMLYR (193 aa). 235–241 serves as a coordination point for ATP; it reads SGGVDSS.

Homodimer.

It catalyses the reaction XMP + L-glutamine + ATP + H2O = GMP + L-glutamate + AMP + diphosphate + 2 H(+). It functions in the pathway purine metabolism; GMP biosynthesis; GMP from XMP (L-Gln route): step 1/1. In terms of biological role, catalyzes the synthesis of GMP from XMP. In Shigella flexneri serotype 5b (strain 8401), this protein is GMP synthase [glutamine-hydrolyzing].